The sequence spans 570 residues: Trans-cinnamate:CoA ligase, peroxisomal (570 aa).

The Microbody targeting signal motif lies at 568 to 570; it reads ARL.

It belongs to the ATP-dependent AMP-binding enzyme family. As to quaternary structure, monomer. It depends on K(+) as a cofactor. As to expression, mostly expressed in flower organs, with highest levels in corollas and petal limbs, and, to a lesser extent, in petal tubes, sepals, pistils, stamen, stigma, anthers and ovaries. Also present at low levels in leaves, stems and roots.

The protein resides in the peroxisome. The enzyme catalyses (E)-4-coumarate + ATP + CoA = (E)-4-coumaroyl-CoA + AMP + diphosphate. It carries out the reaction (E)-caffeate + ATP + CoA = (E)-caffeoyl-CoA + AMP + diphosphate. The catalysed reaction is (E)-cinnamate + ATP + CoA = (E)-cinnamoyl-CoA + AMP + diphosphate. The protein operates within phenylpropanoid metabolism; trans-cinnamate biosynthesis. Its pathway is phytoalexin biosynthesis; 3,4',5-trihydroxystilbene biosynthesis; 3,4',5-trihydroxystilbene from trans-4-coumarate: step 1/2. In terms of biological role, involved in the biosynthesis of floral volatile benzenoid/phenylpropanoid (FVBP) scent (e.g. benzylbenzoate, phenylethylbenzoate, and methylbenzoate). Catalyzes the formation of CoA esters of cinnamic acid, and, with lower efficiency, of 4-coumaric acid and caffeic acid. The chain is Trans-cinnamate:CoA ligase, peroxisomal from Petunia hybrida (Petunia).